The sequence spans 133 residues: MAANDTIGDMLTRIRNANLARHQTTQVMSTRMTRSVASVLKDEGFITSFEESGEGVERRLVITLKYRGKNRQPIINTLQRISKPGLRVYSNRRDLPRVLGGIGIAIISTSSGIMTDRDARQTGVGGEVLCYVW.

This sequence belongs to the universal ribosomal protein uS8 family. In terms of assembly, part of the 30S ribosomal subunit. Contacts proteins S5 and S12.

In terms of biological role, one of the primary rRNA binding proteins, it binds directly to 16S rRNA central domain where it helps coordinate assembly of the platform of the 30S subunit. The polypeptide is Small ribosomal subunit protein uS8 (Acaryochloris marina (strain MBIC 11017)).